A 165-amino-acid chain; its full sequence is Ribosome maturation factor RimM (165 aa).

Positions glutamate 94–valine 165 constitute a PRC barrel domain.

Belongs to the RimM family. In terms of assembly, binds ribosomal protein uS19.

The protein resides in the cytoplasm. In terms of biological role, an accessory protein needed during the final step in the assembly of 30S ribosomal subunit, possibly for assembly of the head region. Essential for efficient processing of 16S rRNA. May be needed both before and after RbfA during the maturation of 16S rRNA. It has affinity for free ribosomal 30S subunits but not for 70S ribosomes. The sequence is that of Ribosome maturation factor RimM from Rickettsia prowazekii (strain Madrid E).